A 436-amino-acid polypeptide reads, in one-letter code: Citrate synthase (436 aa).

Residues His311 and Asp370 contribute to the active site.

Belongs to the citrate synthase family. Homohexamer.

The enzyme catalyses oxaloacetate + acetyl-CoA + H2O = citrate + CoA + H(+). It participates in carbohydrate metabolism; tricarboxylic acid cycle; isocitrate from oxaloacetate: step 1/2. With respect to regulation, allosterically inhibited by NADH. The chain is Citrate synthase (gltA) from Rickettsia prowazekii (strain Madrid E).